The sequence spans 78 residues: Acyl carrier protein (78 aa).

The Carrier domain occupies 2 to 77 (SDTVERVKKI…DAVKFIDKAS (76 aa)). S37 is modified (O-(pantetheine 4'-phosphoryl)serine).

Belongs to the acyl carrier protein (ACP) family. 4'-phosphopantetheine is transferred from CoA to a specific serine of apo-ACP by AcpS. This modification is essential for activity because fatty acids are bound in thioester linkage to the sulfhydryl of the prosthetic group.

The protein resides in the cytoplasm. The protein operates within lipid metabolism; fatty acid biosynthesis. Functionally, carrier of the growing fatty acid chain in fatty acid biosynthesis. The sequence is that of Acyl carrier protein from Bartonella quintana (strain Toulouse) (Rochalimaea quintana).